A 520-amino-acid chain; its full sequence is GMP synthase [glutamine-hydrolyzing] (520 aa).

Positions 12 to 205 (KIIVLDYGSQ…AISICGARGD (194 aa)) constitute a Glutamine amidotransferase type-1 domain. Cys-89 acts as the Nucleophile in catalysis. Active-site residues include His-179 and Glu-181. One can recognise a GMPS ATP-PPase domain in the interval 206-395 (WSMDNFIDME…LGMPDEVVWR (190 aa)). 233–239 (SGGVDSS) lines the ATP pocket.

As to quaternary structure, homodimer.

The enzyme catalyses XMP + L-glutamine + ATP + H2O = GMP + L-glutamate + AMP + diphosphate + 2 H(+). It functions in the pathway purine metabolism; GMP biosynthesis; GMP from XMP (L-Gln route): step 1/1. Its function is as follows. Catalyzes the synthesis of GMP from XMP. The sequence is that of GMP synthase [glutamine-hydrolyzing] from Streptococcus equi subsp. zooepidemicus (strain H70).